The primary structure comprises 254 residues: Large ribosomal subunit protein uL2 (254 aa).

The protein belongs to the universal ribosomal protein uL2 family. As to quaternary structure, component of the large ribosomal subunit. Mature ribosomes consist of a small (40S) and a large (60S) subunit. The 40S subunit contains about 32 different proteins and 1 molecule of RNA (18S). The 60S subunit contains 45 different proteins and 3 molecules of RNA (25S, 5.8S and 5S).

The protein localises to the cytoplasm. Functionally, component of the ribosome, a large ribonucleoprotein complex responsible for the synthesis of proteins in the cell. The small ribosomal subunit (SSU) binds messenger RNAs (mRNAs) and translates the encoded message by selecting cognate aminoacyl-transfer RNA (tRNA) molecules. The large subunit (LSU) contains the ribosomal catalytic site termed the peptidyl transferase center (PTC), which catalyzes the formation of peptide bonds, thereby polymerizing the amino acids delivered by tRNAs into a polypeptide chain. The nascent polypeptides leave the ribosome through a tunnel in the LSU and interact with protein factors that function in enzymatic processing, targeting, and the membrane insertion of nascent chains at the exit of the ribosomal tunnel. This chain is Large ribosomal subunit protein uL2, found in Candida albicans (strain SC5314 / ATCC MYA-2876) (Yeast).